We begin with the raw amino-acid sequence, 843 residues long: Neuroligin-1 (843 aa).

The first 45 residues, 1–45 (MALPRCMWPNYVWRAMMACVVHRGSGAPLTLCLLGCLLQTFHVLS), serve as a signal peptide directing secretion. Residues 46-697 (QKLDDVDPLV…DQRDYSTELS (652 aa)) are Extracellular-facing. Residue N109 is glycosylated (N-linked (GlcNAc...) (complex) asparagine). Cysteines 117 and 153 form a disulfide. The disordered stretch occupies residues 167–190 (LTKKHTDDLGDNDGAEDEDIRDSG). The segment covering 175–186 (LGDNDGAEDEDI) has biased composition (acidic residues). N-linked (GlcNAc...) (complex) asparagine glycosylation is found at N303 and N343. 2 disulfide bridges follow: C342–C353 and C512–C546. Residue N547 is glycosylated (N-linked (GlcNAc...) asparagine). The tract at residues 647–688 (TKVPSTDITLRPTRKNSTPVTSAFPTAKQDDPKQQPSPFSVD) is disordered. A compositionally biased stretch (polar residues) spans 661–670 (KNSTPVTSAF). S683 and S686 each carry an O-linked (GalNAc...) serine glycan. A helical transmembrane segment spans residues 698–718 (VTIAVGASLLFLNILAFAALY). The Cytoplasmic portion of the chain corresponds to 719–843 (YKKDKRRHDV…HPHSHSTTRV (125 aa)). Residues 822-843 (GGQNNTLPHPHPHPHSHSTTRV) are disordered. Over residues 831 to 843 (PHPHPHSHSTTRV) the composition is skewed to basic residues.

It belongs to the type-B carboxylesterase/lipase family. In terms of assembly, interacts with neurexins NRXN1, NRXN2 and NRXN3. Interaction with neurexins is mediated by heparan sulfate glycan modification on neurexin. Interacts (via its C-terminus) with DLG4/PSD-95 (via PDZ domain 3). Interacts with AIP1, GOPC and PDZRN3. Interacts with NLGN3. Brain and arteries (at protein level). Expressed in olfactory bulb. Detected in brain.

It is found in the cell membrane. It localises to the postsynaptic density. The protein localises to the synaptic cleft. Its subcellular location is the synaptic cell membrane. Cell surface protein involved in cell-cell-interactions via its interactions with neurexin family members. Plays a role in synapse function and synaptic signal transmission, and probably mediates its effects by recruiting and clustering other synaptic proteins. May promote the initial formation of synapses, but is not essential for this. In vitro, triggers the de novo formation of presynaptic structures. May be involved in specification of excitatory synapses. Required to maintain wakefulness quality and normal synchrony of cerebral cortex activity during wakefulness and sleep. The protein is involved in nervous system development. The protein is Neuroligin-1 (Nlgn1) of Mus musculus (Mouse).